The sequence spans 750 residues: (13E)-labda-7,13-dien-15-ol synthase (750 aa).

Mg(2+) contacts are provided by Asp284, Asp286, Asp501, Asp505, Asn647, Thr651, and Glu655. The DXDD motif motif lies at 284–287; it reads DIDD. Positions 501–505 match the DDXXD motif motif; it reads DDLAD.

Belongs to the terpene synthase family. Requires Mg(2+) as cofactor.

The enzyme catalyses geranylgeranyl diphosphate + H2O = (13E)-labda-7,13-dien-15-ol + diphosphate. Its pathway is secondary metabolite biosynthesis; terpenoid biosynthesis. In terms of biological role, bifunctional diterpene synthase that directly generates the endocyclic double bond, as well as the hydroxyl group: produces an endocyclic double bond isomer of copalyl diphosphate (CPP), and carries out subsequent replacement of the diphosphate by a hydroxyl group to form (13E)-labda-7,13-dien-15-ol. This Selaginella moellendorffii (Spikemoss) protein is (13E)-labda-7,13-dien-15-ol synthase.